The sequence spans 241 residues: 2-C-methyl-D-erythritol 4-phosphate cytidylyltransferase (241 aa).

This sequence belongs to the IspD/TarI cytidylyltransferase family. IspD subfamily.

It carries out the reaction 2-C-methyl-D-erythritol 4-phosphate + CTP + H(+) = 4-CDP-2-C-methyl-D-erythritol + diphosphate. Its pathway is isoprenoid biosynthesis; isopentenyl diphosphate biosynthesis via DXP pathway; isopentenyl diphosphate from 1-deoxy-D-xylulose 5-phosphate: step 2/6. Functionally, catalyzes the formation of 4-diphosphocytidyl-2-C-methyl-D-erythritol from CTP and 2-C-methyl-D-erythritol 4-phosphate (MEP). This Alkaliphilus metalliredigens (strain QYMF) protein is 2-C-methyl-D-erythritol 4-phosphate cytidylyltransferase.